The chain runs to 355 residues: Chemerin-like receptor 2 (355 aa).

Residues 1–41 (MEDLEETLFEEFENYSYDLDYYSLESDLEEKVQLGVVHWVS) are Extracellular-facing. Asn-14 is a glycosylation site (N-linked (GlcNAc...) asparagine). Residues 42–62 (LVLYCLAFVLGIPGNAIVIWF) traverse the membrane as a helical segment. Topologically, residues 63–73 (TGFKWKKTVTT) are cytoplasmic. The chain crosses the membrane as a helical span at residues 74-94 (LWFLNLAIADFIFLLFLPLYI). The Extracellular portion of the chain corresponds to 95–112 (SYVAMNFHWPFGIWLCKA). A disulfide bridge links Cys-110 with Cys-187. The chain crosses the membrane as a helical span at residues 113–133 (NSFTAQLNMFASVFFLTVISL). Over 134 to 154 (DHYIHLIHPVLSHRHRTLKNS) the chain is Cytoplasmic. The chain crosses the membrane as a helical span at residues 155 to 175 (LIVIIFIWLLASLIGGPALYF). Residues 176-210 (RDTVEFNNHTLCYNNFQKHDPDLTLIRHHVLTWVK) lie on the Extracellular side of the membrane. Residues 211-231 (FIIGYLFPLLTMSICYLCLIF) form a helical membrane-spanning segment. Topologically, residues 232–247 (KVKKRSILISSRHFWT) are cytoplasmic. A helical membrane pass occupies residues 248–268 (ILVVVVAFVVCWTPYHLFSIW). Residues 269–286 (ELTIHHNSYSHHVMQAGI) lie on the Extracellular side of the membrane. Residues 287-307 (PLSTGLAFLNSCLNPILYVLI) traverse the membrane as a helical segment. Over 308–355 (SKKFQARFRSSVAEILKYTLWEVSCSGTVSEQLRNSETKNLCLLETAQ) the chain is Cytoplasmic.

It belongs to the chemokine-like receptor (CMKLR) family. In terms of tissue distribution, expressed in hippocampus.

The protein localises to the cell membrane. Functionally, receptor for chemoattractant adipokine chemerin/RARRES2 suggesting a role for this receptor in the regulation of inflammation and energy homesotasis. Signals mainly via beta-arrestin pathway. Binding of RARRES2 activates weakly G proteins, calcium mobilization and MAPK1/MAPK3 (ERK1/2) phosphorylation too. Also acts as a receptor for TAFA1, mediates its effects on neuronal stem-cell proliferation and differentiation via the activation of ROCK/ERK and ROCK/STAT3 signaling pathway. In terms of biological role, (Microbial infection) Coreceptor for HIV-1. This is Chemerin-like receptor 2 from Homo sapiens (Human).